Consider the following 63-residue polypeptide: UPF0434 protein Mmar10_2939 (63 aa).

The protein belongs to the UPF0434 family.

The chain is UPF0434 protein Mmar10_2939 from Maricaulis maris (strain MCS10) (Caulobacter maris).